The primary structure comprises 592 residues: A-type ATP synthase subunit A (592 aa).

Residue 233–240 participates in ATP binding; that stretch reads GPFGSGKT.

It belongs to the ATPase alpha/beta chains family. Has multiple subunits with at least A(3), B(3), C, D, E, F, H, I and proteolipid K(x).

Its subcellular location is the cell membrane. The catalysed reaction is ATP + H2O + 4 H(+)(in) = ADP + phosphate + 5 H(+)(out). Functionally, component of the A-type ATP synthase that produces ATP from ADP in the presence of a proton gradient across the membrane. The A chain is the catalytic subunit. This is A-type ATP synthase subunit A from Saccharolobus islandicus (strain L.S.2.15 / Lassen #1) (Sulfolobus islandicus).